The chain runs to 486 residues: Dipeptide and tripeptide permease B (486 aa).

Over 1–27 (MNKPVSIGLLQQPKPFFMIFFVELWER) the chain is Cytoplasmic. A helical transmembrane segment spans residues 28-48 (FGYYGVQGVLTVYFVQKLGFS). The Periplasmic portion of the chain corresponds to 49 to 52 (QEQA). The chain crosses the membrane as a helical span at residues 53–73 (FITFGAFAALVFGLISIGGYV). Residues 74–82 (GDHLLGTKR) lie on the Cytoplasmic side of the membrane. A helical membrane pass occupies residues 83–103 (TIVLGAIVLAIGYFMTGLSIL). Over 104 to 106 (HPN) the chain is Periplasmic. A helical transmembrane segment spans residues 107–127 (LIFYALGTIAVGNGLFKANPA). Topologically, residues 128-146 (SLLSKCYPPKDPRLDGAFT) are cytoplasmic. A helical membrane pass occupies residues 147–167 (LFYMSINLGSLFSLALAPVIA). Topologically, residues 168-172 (EKFSY) are periplasmic. The chain crosses the membrane as a helical span at residues 173 to 193 (AVTYNICGIGLIIALLVYIFC). The Cytoplasmic portion of the chain corresponds to 194-211 (RNTVRNIGSEPDHQRINY). The chain crosses the membrane as a helical span at residues 212–232 (TNLFLVVAGSVVMVYVCAWLM). Residue histidine 233 is a topological domain, periplasmic. Residues 234-254 (NVKIANIMLITLSVIVVFIFF) form a helical membrane-spanning segment. Residues 255 to 267 (REALKQDKIGRNK) lie on the Cytoplasmic side of the membrane. The helical transmembrane segment at 268-288 (MFVAFILMLQAIVFFILYAQM) threads the bilayer. The Periplasmic segment spans residues 289–311 (PTSLNFFAIHNVHHQLLGFNINP). A helical membrane pass occupies residues 312–332 (VSFQALNPFWIVVASPILAVL). Residues 333–348 (YTHWGAKGKDLTMPAK) are Cytoplasmic-facing. The chain crosses the membrane as a helical span at residues 349–369 (FAVGMFLCSLGFLTAAAAGLW). Over 370–375 (FADEQG) the chain is Periplasmic. Residues 376–396 (LTSAWFIVLVYLFQGVGELMI) traverse the membrane as a helical segment. Residues 397-419 (SALGLAMIAALVPQYLMGFILGM) are Cytoplasmic-facing. Residues 420-440 (WYLTQATSSLLGGYVAALTAA) traverse the membrane as a helical segment. The Periplasmic portion of the chain corresponds to 441-456 (PKGITDPLQTLPVYTS). A helical membrane pass occupies residues 457–477 (VFGKIGIATFIVAIIMAATVP). Over 478–486 (LLNRMMQEK) the chain is Cytoplasmic.

Belongs to the major facilitator superfamily. Proton-dependent oligopeptide transporter (POT/PTR) (TC 2.A.17) family. DtpB subfamily.

It localises to the cell inner membrane. Its function is as follows. Proton-dependent permease that transports di- and tripeptides. The sequence is that of Dipeptide and tripeptide permease B from Photorhabdus luminescens (Xenorhabdus luminescens).